A 128-amino-acid polypeptide reads, in one-letter code: UPF0325 protein YaeH (128 aa).

The protein belongs to the UPF0325 family.

This is UPF0325 protein YaeH from Escherichia coli (strain ATCC 8739 / DSM 1576 / NBRC 3972 / NCIMB 8545 / WDCM 00012 / Crooks).